A 953-amino-acid chain; its full sequence is Dual serine/threonine and tyrosine protein kinase (953 aa).

Positions 665 to 926 constitute a Protein kinase domain; sequence PKLEREIGRG…VQSKLQDIYT (262 aa). ATP contacts are provided by residues 671–679 and K694; that span reads IGRGQYGVV. The active-site Proton acceptor is the D791. The interval 932–953 is disordered; it reads REAEGGGGGGAKEQQNLKSDTL.

It belongs to the protein kinase superfamily. Ser/Thr protein kinase family.

It localises to the cytoplasm. The protein localises to the cell membrane. It is found in the apical cell membrane. The protein resides in the basolateral cell membrane. Its subcellular location is the cell junction. The catalysed reaction is L-seryl-[protein] + ATP = O-phospho-L-seryl-[protein] + ADP + H(+). It carries out the reaction L-threonyl-[protein] + ATP = O-phospho-L-threonyl-[protein] + ADP + H(+). The enzyme catalyses L-tyrosyl-[protein] + ATP = O-phospho-L-tyrosyl-[protein] + ADP + H(+). May act as a positive regulator of ERK phosphorylation downstream of fibroblast growth factor-receptor activation. May induce both caspase-dependent apoptosis and caspase-independent cell death. May play a role in the embryonic development. The chain is Dual serine/threonine and tyrosine protein kinase from Strongylocentrotus purpuratus (Purple sea urchin).